Reading from the N-terminus, the 165-residue chain is Putative 1,2-phenylacetyl-CoA epoxidase, subunit D (165 aa).

As to quaternary structure, monomer.

Its pathway is aromatic compound metabolism; phenylacetate degradation. Its function is as follows. Possible component of 1,2-phenylacetyl-CoA epoxidase multicomponent enzyme system which catalyzes the reduction of phenylacetyl-CoA (PA-CoA) to form 1,2-epoxyphenylacetyl-CoA. The subunit D may have a function related to the maturation of the monooxygenase complex, rather than direct involvement in catalysis. PaaD could assist either in maturation of PaaE or PaaA. This chain is Putative 1,2-phenylacetyl-CoA epoxidase, subunit D (paaD), found in Escherichia coli (strain K12).